Here is a 265-residue protein sequence, read N- to C-terminus: Glutamate racemase (265 aa).

Substrate is bound by residues 12-13 and 44-45; these read DS and YG. The active-site Proton donor/acceptor is the C75. 76–77 is a binding site for substrate; that stretch reads NT. C186 serves as the catalytic Proton donor/acceptor. 187–188 serves as a coordination point for substrate; it reads TH.

It belongs to the aspartate/glutamate racemases family.

It catalyses the reaction L-glutamate = D-glutamate. It participates in cell wall biogenesis; peptidoglycan biosynthesis. In terms of biological role, provides the (R)-glutamate required for cell wall biosynthesis. This Pseudomonas putida (strain W619) protein is Glutamate racemase.